The following is a 346-amino-acid chain: Putative F-box/kelch-repeat protein At1g27420 (346 aa).

The F-box domain occupies 9-56 (PIIPGLTDDVAELCVSKIPRSSFQITSQVCRRWRSFLRSQHFAAVRKL). Kelch repeat units lie at residues 62–109 (EFLC…VLDG), 111–167 (KIVF…EVNG), 168–215 (LLYV…AFSS), 217–257 (LYAV…VRNK), and 259–300 (YFMD…VWNN).

The sequence is that of Putative F-box/kelch-repeat protein At1g27420 from Arabidopsis thaliana (Mouse-ear cress).